Reading from the N-terminus, the 597-residue chain is Chaperonin 60 subunit beta 3, chloroplastic (597 aa).

Residues 1-20 (MASTFSATSSMGSSLAPPSN) are disordered. Residues 1–29 (MASTFSATSSMGSSLAPPSNRLSSFVSIS) constitute a chloroplast transit peptide. Phosphoserine occurs at positions 97 and 474. Residues 387–489 (STEEVVKKRV…KETLANDEEK (103 aa)) are a coiled coil.

Belongs to the chaperonin (HSP60) family. In terms of assembly, part of the Cpn60 complex composed of 7 alpha and 7 beta subunits. Can also form a complex composed of 14 beta subunits only. Both complexes show ATPase activity. The Cpn60 complex interacts with the Cpn10 complex.

It is found in the plastid. The protein localises to the chloroplast. Involved in protein assisted folding. This is Chaperonin 60 subunit beta 3, chloroplastic (CPN60B3) from Arabidopsis thaliana (Mouse-ear cress).